We begin with the raw amino-acid sequence, 304 residues long: Energy-coupling factor transporter ATP-binding protein EcfA2 (304 aa).

Residues 11-260 form the ABC transporter domain; the sequence is LKADEILAVS…QTFLEKTTIV (250 aa). 54 to 61 contacts ATP; the sequence is GDSGSGKS.

The protein belongs to the ABC transporter superfamily. Energy-coupling factor EcfA family. In terms of assembly, forms a stable energy-coupling factor (ECF) transporter complex composed of 2 membrane-embedded substrate-binding proteins (S component), 2 ATP-binding proteins (A component) and 2 transmembrane proteins (T component).

It is found in the cell membrane. ATP-binding (A) component of a common energy-coupling factor (ECF) ABC-transporter complex. Unlike classic ABC transporters this ECF transporter provides the energy necessary to transport a number of different substrates. The polypeptide is Energy-coupling factor transporter ATP-binding protein EcfA2 (Mycoplasma genitalium (strain ATCC 33530 / DSM 19775 / NCTC 10195 / G37) (Mycoplasmoides genitalium)).